The chain runs to 75 residues: MSVFDKVKSIVVDQLGVEEDEITLETTFADLNADSLDIVELIMALEEEFDLDIPDEDAEKIRNVGDAVNYIKENQ.

The 75-residue stretch at 1 to 75 (MSVFDKVKSI…DAVNYIKENQ (75 aa)) folds into the Carrier domain. Ser-35 bears the O-(pantetheine 4'-phosphoryl)serine mark.

The protein belongs to the acyl carrier protein (ACP) family. In terms of processing, 4'-phosphopantetheine is transferred from CoA to a specific serine of apo-ACP by AcpS. This modification is essential for activity because fatty acids are bound in thioester linkage to the sulfhydryl of the prosthetic group.

The protein localises to the cytoplasm. Its pathway is lipid metabolism; fatty acid biosynthesis. Carrier of the growing fatty acid chain in fatty acid biosynthesis. This is Acyl carrier protein from Desulfitobacterium hafniense (strain Y51).